The following is a 357-amino-acid chain: tRNA N6-adenosine threonylcarbamoyltransferase (357 aa).

Histidine 115 and histidine 119 together coordinate Fe cation. Substrate contacts are provided by residues leucine 137–glycine 141, aspartate 170, glycine 183, and asparagine 281. Aspartate 309 is a binding site for Fe cation.

It belongs to the KAE1 / TsaD family. Fe(2+) serves as cofactor.

It is found in the cytoplasm. It catalyses the reaction L-threonylcarbamoyladenylate + adenosine(37) in tRNA = N(6)-L-threonylcarbamoyladenosine(37) in tRNA + AMP + H(+). Required for the formation of a threonylcarbamoyl group on adenosine at position 37 (t(6)A37) in tRNAs that read codons beginning with adenine. Is involved in the transfer of the threonylcarbamoyl moiety of threonylcarbamoyl-AMP (TC-AMP) to the N6 group of A37, together with TsaE and TsaB. TsaD likely plays a direct catalytic role in this reaction. The polypeptide is tRNA N6-adenosine threonylcarbamoyltransferase (Bradyrhizobium diazoefficiens (strain JCM 10833 / BCRC 13528 / IAM 13628 / NBRC 14792 / USDA 110)).